The primary structure comprises 123 residues: Undecaprenol kinase (123 aa).

Residues 1 to 33 lie on the Cytoplasmic side of the membrane; that stretch reads MDSKDHRNELNRFFKSFVHAGRGIWETARTERN. The helical transmembrane segment at 34–51 threads the bilayer; sequence FQFHAAAACAVLICGFLV. The Extracellular segment spans residues 52–57; the sequence is ELSIIE. Residues 58 to 74 form a helical membrane-spanning segment; the sequence is WMIIFLLIGGMFSLELL. At 75-99 the chain is on the cytoplasmic side; that stretch reads NTAIEHTVDLITDKHHPLAKAAKDA. A helical transmembrane segment spans residues 100 to 120; that stretch reads AAGAVCVFAVISCIIGLLIFL. Residues 121 to 123 are Extracellular-facing; the sequence is PKL.

It belongs to the bacterial diacylglycerol kinase family.

The protein resides in the cell membrane. It carries out the reaction di-trans,octa-cis-undecaprenol + ATP = di-trans,octa-cis-undecaprenyl phosphate + ADP + H(+). In terms of biological role, catalyzes the phosphorylation of undecaprenol in vitro, which is probably the physiological substrate. Exhibits no detectable activity against other substrates such as monoacylglycerol, ceramide, or diacylglycerol (DAG). Appears indispensable for the maintenance of spore stability and viability in B.subtilis. In Bacillus subtilis (strain 168), this protein is Undecaprenol kinase (dgkA).